Reading from the N-terminus, the 208-residue chain is Imidazole glycerol phosphate synthase subunit HisH (208 aa).

Residues 2-208 (NVTIVDYNSG…LKIIENFLNL (207 aa)) enclose the Glutamine amidotransferase type-1 domain. The Nucleophile role is filled by cysteine 85. Active-site residues include histidine 190 and glutamate 192.

As to quaternary structure, heterodimer of HisH and HisF.

The protein localises to the cytoplasm. The enzyme catalyses 5-[(5-phospho-1-deoxy-D-ribulos-1-ylimino)methylamino]-1-(5-phospho-beta-D-ribosyl)imidazole-4-carboxamide + L-glutamine = D-erythro-1-(imidazol-4-yl)glycerol 3-phosphate + 5-amino-1-(5-phospho-beta-D-ribosyl)imidazole-4-carboxamide + L-glutamate + H(+). The catalysed reaction is L-glutamine + H2O = L-glutamate + NH4(+). It functions in the pathway amino-acid biosynthesis; L-histidine biosynthesis; L-histidine from 5-phospho-alpha-D-ribose 1-diphosphate: step 5/9. In terms of biological role, IGPS catalyzes the conversion of PRFAR and glutamine to IGP, AICAR and glutamate. The HisH subunit catalyzes the hydrolysis of glutamine to glutamate and ammonia as part of the synthesis of IGP and AICAR. The resulting ammonia molecule is channeled to the active site of HisF. The chain is Imidazole glycerol phosphate synthase subunit HisH from Pelagibacter ubique (strain HTCC1062).